We begin with the raw amino-acid sequence, 314 residues long: Ecto-ADP-ribosyltransferase 4 (314 aa).

An N-terminal signal peptide occupies residues 1-46 (MGPLINRCKKILLPTTVPPATMRIWLLGGPLPFLLLLSGLQRPTEG). Disulfide bonds link Cys69-Cys280 and Cys182-Cys231. Positions 91–276 (KNYFRMWQKA…LQLRSTGNLS (186 aa)) constitute a TR mART core domain. An N-linked (GlcNAc...) asparagine glycan is attached at Asn114. Tyr126 is an NAD(+) binding site. N-linked (GlcNAc...) asparagine glycosylation is present at Asn178. NAD(+) is bound at residue Gln206. A glycan (N-linked (GlcNAc...) asparagine) is linked at Asn222. Ser240 is an NAD(+) binding site. Asn257 and Asn274 each carry an N-linked (GlcNAc...) asparagine glycan. Ala285 carries GPI-anchor amidated alanine lipidation. Positions 286-314 (SSKKCIPDPIAIASLSFLTSVIIFSKSRV) are cleaved as a propeptide — removed in mature form.

The protein belongs to the Arg-specific ADP-ribosyltransferase family.

It is found in the cell membrane. It carries out the reaction L-arginyl-[protein] + NAD(+) = N(omega)-(ADP-D-ribosyl)-L-arginyl-[protein] + nicotinamide + H(+). In Pan troglodytes (Chimpanzee), this protein is Ecto-ADP-ribosyltransferase 4 (ART4).